A 701-amino-acid chain; its full sequence is Elongation factor G (701 aa).

A tr-type G domain is found at 11 to 287; the sequence is NKVRNIGIMA…AVVDYLPSPL (277 aa). GTP is bound by residues 20-27, 84-88, and 138-141; these read AHIDAGKT, DTPGH, and NKMD.

Belongs to the TRAFAC class translation factor GTPase superfamily. Classic translation factor GTPase family. EF-G/EF-2 subfamily.

The protein resides in the cytoplasm. In terms of biological role, catalyzes the GTP-dependent ribosomal translocation step during translation elongation. During this step, the ribosome changes from the pre-translocational (PRE) to the post-translocational (POST) state as the newly formed A-site-bound peptidyl-tRNA and P-site-bound deacylated tRNA move to the P and E sites, respectively. Catalyzes the coordinated movement of the two tRNA molecules, the mRNA and conformational changes in the ribosome. The sequence is that of Elongation factor G from Mycobacterium sp. (strain JLS).